The primary structure comprises 299 residues: Regucalcin (299 aa).

Glu18 contacts a divalent metal cation. 3 residues coordinate substrate: Arg101, Asn103, and Glu121. Lys144 bears the N6-succinyllysine mark. A divalent metal cation is bound by residues Asn154 and Asp204. Asp204 (proton donor/acceptor) is an active-site residue. An N6-succinyllysine mark is found at Lys244 and Lys253.

This sequence belongs to the SMP-30/CGR1 family. Monomer. The cofactor is Zn(2+). Requires Mn(2+) as cofactor. Ca(2+) serves as cofactor. Mg(2+) is required as a cofactor.

The protein resides in the cytoplasm. The catalysed reaction is D-glucono-1,5-lactone + H2O = D-gluconate + H(+). In terms of biological role, gluconolactonase with low activity towards other sugar lactones, including gulonolactone and galactonolactone. Can also hydrolyze diisopropyl phosphorofluoridate and phenylacetate (in vitro). Calcium-binding protein. Modulates Ca(2+) signaling, and Ca(2+)-dependent cellular processes and enzyme activities. The polypeptide is Regucalcin (RGN) (Pongo abelii (Sumatran orangutan)).